The following is a 402-amino-acid chain: Propionate kinase (402 aa).

The ATP site is built by asparagine 11 and lysine 18. A Mg(2+)-binding site is contributed by asparagine 11. Arginine 86 is a substrate binding site. Aspartate 143 functions as the Proton donor/acceptor in the catalytic mechanism. ATP-binding positions include histidine 175, 203–207 (HLGNG), 278–280 (DLR), and 326–330 (GIGEN).

The protein belongs to the acetokinase family. TdcD subfamily. Homodimer. Mg(2+) serves as cofactor.

It catalyses the reaction propanoate + ATP = propanoyl phosphate + ADP. It functions in the pathway amino-acid degradation; L-threonine degradation via propanoate pathway; propanoate from L-threonine: step 4/4. Catalyzes the conversion of propionyl phosphate and ADP to propionate and ATP. This is Propionate kinase from Salmonella typhimurium (strain D23580).